Reading from the N-terminus, the 246-residue chain is Ribonuclease PH (246 aa).

Residues arginine 91 and 129-131 (GTR) contribute to the phosphate site.

This sequence belongs to the RNase PH family. In terms of assembly, homohexameric ring arranged as a trimer of dimers.

The catalysed reaction is tRNA(n+1) + phosphate = tRNA(n) + a ribonucleoside 5'-diphosphate. Functionally, phosphorolytic 3'-5' exoribonuclease that plays an important role in tRNA 3'-end maturation. Removes nucleotide residues following the 3'-CCA terminus of tRNAs; can also add nucleotides to the ends of RNA molecules by using nucleoside diphosphates as substrates, but this may not be physiologically important. Probably plays a role in initiation of 16S rRNA degradation (leading to ribosome degradation) during starvation. The sequence is that of Ribonuclease PH from Paraburkholderia phytofirmans (strain DSM 17436 / LMG 22146 / PsJN) (Burkholderia phytofirmans).